The following is a 144-amino-acid chain: Aspartate carbamoyltransferase regulatory chain (144 aa).

Zn(2+) is bound by residues C103, C108, C132, and C135.

It belongs to the PyrI family. Contains catalytic and regulatory chains. Zn(2+) serves as cofactor.

In terms of biological role, involved in allosteric regulation of aspartate carbamoyltransferase. The sequence is that of Aspartate carbamoyltransferase regulatory chain from Clostridium tetani (strain Massachusetts / E88).